Reading from the N-terminus, the 513-residue chain is Protein phosphatase 1H (513 aa).

Residue Ser-7 is modified to Phosphoserine. Positions 77–506 constitute a PPM-type phosphatase domain; sequence ATGYAEVINA…DDISVYVIPL (430 aa). Positions 110-133 are disordered; sequence ITSTPNRNSKRRSSLPNGEGLQLK. Thr-113 is modified (phosphothreonine). Phosphoserine occurs at positions 123 and 210. The residue at position 212 (Arg-212) is an Omega-N-methylarginine. Phosphoserine is present on Ser-220. Thr-223 is subject to Phosphothreonine. At Ser-421 the chain carries Phosphoserine.

This sequence belongs to the PP2C family.

The protein localises to the nucleus. The protein resides in the cytoplasm. The enzyme catalyses O-phospho-L-seryl-[protein] + H2O = L-seryl-[protein] + phosphate. The catalysed reaction is O-phospho-L-threonyl-[protein] + H2O = L-threonyl-[protein] + phosphate. In terms of biological role, dephosphorylates CDKN1B at 'Thr-187', thus removing a signal for proteasomal degradation. The polypeptide is Protein phosphatase 1H (Ppm1h) (Rattus norvegicus (Rat)).